The chain runs to 106 residues: Putative double-stranded DNA mimic protein VV1_3059 (106 aa).

The protein belongs to the putative dsDNA mimic protein family.

In terms of biological role, may act as a double-stranded DNA (dsDNA) mimic. Probably regulates the activity of a dsDNA-binding protein. The chain is Putative double-stranded DNA mimic protein VV1_3059 from Vibrio vulnificus (strain CMCP6).